An 87-amino-acid polypeptide reads, in one-letter code: Acylphosphatase (87 aa).

In terms of domain architecture, Acylphosphatase-like spans 1 to 87; it reads MAWVHGRVQG…EDYQDFRIRY (87 aa). Catalysis depends on residues Arg14 and Asn32.

This sequence belongs to the acylphosphatase family.

The catalysed reaction is an acyl phosphate + H2O = a carboxylate + phosphate + H(+). The protein is Acylphosphatase (acyP) of Cronobacter sakazakii (strain ATCC BAA-894) (Enterobacter sakazakii).